We begin with the raw amino-acid sequence, 534 residues long: Ulvan lyase NLR42 (534 aa).

A signal peptide spans M1–T47. C59 and C89 are joined by a disulfide. The Ca(2+) site is built by G63, N68, D86, T88, A91, and D92. Y164 contributes to the substrate binding site. Residue K169 is the Proton acceptor of the active site. Substrate-binding positions include S218 to R223 and Y288 to K291. The active-site Proton donor/acceptor is Y288. The interval P316–L449 is ulvan-binding domain. Residues S450 to N534 constitute a propeptide, removed by the type IX secretion system (T9SS).

This sequence belongs to the polysaccharide lyase 28 family. Requires Ca(2+) as cofactor.

The protein resides in the secreted. Ulvan lyase involved in ulvan degradation. Ulvan is the main polysaccharide component of the Ulvales (green seaweed) cell wall. It is composed of disaccharide building blocks comprising 3-sulfated rhamnose (Rha3S) linked to D-glucuronic acid (GlcA), L-iduronic acid (IduA), or D-xylose (Xyl). Ulvan lyase catalyzes the endolytic cleavage of the glycosidic bond between Rha3S and the uronic acids GlcA or IduA, producing oligosaccharides that have unsaturated 4-deoxy-L-threo-hex-4-enopyranosiduronic acid (deltaUA) at the non-reducing end. This results eventually in the degradation of the ulvan polysaccharide into deltaUA-Rha3S disaccharides and deltaUA-Rha3S-Xyl-Rha3S tetrasaccharides. In Nonlabens ulvanivorans (Persicivirga ulvanivorans), this protein is Ulvan lyase NLR42.